The sequence spans 618 residues: Sodium/iodide cotransporter (618 aa).

Residues methionine 1–proline 14 are Extracellular-facing. Residues tryptophan 15–glycine 31 form a helical membrane-spanning segment. The Cytoplasmic portion of the chain corresponds to leucine 32 to alanine 56. The chain crosses the membrane as a discontinuously helical span at residues valine 57–alanine 80. 3 residues coordinate Na(+): serine 69, valine 71, and glutamine 72. An iodide-binding site is contributed by valine 76. Topologically, residues alanine 81–glycine 84 are extracellular. Residues leucine 85–phenylalanine 105 form a helical membrane-spanning segment. An iodide-binding site is contributed by methionine 90. The Cytoplasmic portion of the chain corresponds to leucine 106 to arginine 130. Residues leucine 131 to asparagine 157 form a helical membrane-spanning segment. Tyrosine 144 lines the Na(+) pocket. Residues glutamine 158–aspartate 163 are Extracellular-facing. Residues isoleucine 164 to valine 181 traverse the membrane as a helical segment. The Cytoplasmic segment spans residues glycine 182–tryptophan 189. A helical membrane pass occupies residues threonine 190 to arginine 208. At glycine 209–threonine 243 the chain is on the extracellular side. Residues phenylalanine 244–valine 266 traverse the membrane as a discontinuously helical segment. Position 255 (tryptophan 255) interacts with iodide. Methionine 258 contributes to the Na(+) binding site. Residues glutamine 267–alanine 278 are Cytoplasmic-facing. Residues lysine 279 to isoleucine 301 traverse the membrane as a helical segment. The Extracellular portion of the chain corresponds to valine 302–aspartate 335. Residues leucine 336–alanine 363 form a helical membrane-spanning segment. The Cytoplasmic segment spans residues alanine 364–isoleucine 386. Residues serine 387 to leucine 408 form a helical membrane-spanning segment. Residues glycine 409–glycine 411 are Extracellular-facing. A helical transmembrane segment spans residues valine 412–leucine 437. Residue leucine 413 participates in iodide binding. Na(+) is bound by residues serine 416 and phenylalanine 417. Residue phenylalanine 417 participates in iodide binding. Residues proline 438–asparagine 441 lie on the Cytoplasmic side of the membrane. The chain crosses the membrane as a helical span at residues threonine 442–leucine 465. Residues tyrosine 466 to alanine 520 are Extracellular-facing. 2 N-linked (GlcNAc...) asparagine glycosylation sites follow: asparagine 485 and asparagine 497. The chain crosses the membrane as a helical span at residues valine 521 to threonine 545. Residues glycine 546 to leucine 618 are Cytoplasmic-facing. Serine 551 carries the phosphoserine; by PKA modification. Over residues proline 571 to glutamate 587 the composition is skewed to basic and acidic residues. Residues proline 571–leucine 618 are disordered.

It belongs to the sodium:solute symporter (SSF) (TC 2.A.21) family. As to quaternary structure, monomer. Glycosylated.

The protein localises to the cell membrane. Its subcellular location is the cytoplasm. The enzyme catalyses iodide(out) + 2 Na(+)(out) = iodide(in) + 2 Na(+)(in). It carries out the reaction chlorate(out) + 2 Na(+)(out) = chlorate(in) + 2 Na(+)(in). The catalysed reaction is thiocyanate(out) + 2 Na(+)(out) = thiocyanate(in) + 2 Na(+)(in). It catalyses the reaction nitrate(out) + 2 Na(+)(out) = nitrate(in) + 2 Na(+)(in). The enzyme catalyses selenocyanate(out) + 2 Na(+)(out) = selenocyanate(in) + 2 Na(+)(in). Perchlorate inhibits iodide transport activity. Oxyanions inhibit iodide transport activity by blocking the binding sites for iodide and one of the sodium ions. Sodium:iodide symporter that mediates the transport of iodide into the thyroid gland. Can also mediate the transport of chlorate, thiocynate, nitrate and selenocynate. The protein is Sodium/iodide cotransporter (Slc5a5) of Mus musculus (Mouse).